The primary structure comprises 569 residues: Dicarboxylate transporter 1, chloroplastic (569 aa).

The N-terminal 93 residues, 1-93 (MASMALSLTS…VPSPAPVSAP (93 aa)), are a transit peptide targeting the chloroplast. Over residues 23 to 74 (SLKPLSKSQPSISLPSLRSNASKSPSLSHKHFLSPPSLLLPHKLKPISASSP) the composition is skewed to low complexity. The segment at 23–93 (SLKPLSKSQP…VPSPAPVSAP (71 aa)) is disordered. Pro residues predominate over residues 75–90 (TNPPPPPAPVPSPAPV). A run of 12 helical transmembrane segments spans residues 106–126 (PLLASILTGVIIWFIPTPEGV), 134–154 (LAIFLSTIVGIITQPLPLGAV), 172–192 (AAFSAFGDPIPWLIALAFFFA), 241–261 (AGGIFLPLVKSLCIACGSNVG), 268–288 (LGAWLMLTCFQTSVISSSMFL), 317–337 (AAFVPGLVSLIVVPLLLYVVY), 367–387 (IMAVTLLLTVGLWVFGGKLGV), 388–408 (DAVTAAILGLSVLLITGVVTW), 423–443 (WFAALIAMAGYLNKYGLITWF), 450–470 (VVGGLGLSWQMSFGVLVLLYF), 490–510 (FLSVASALGTPPFLAAIVLSF), and 543–563 (YGFLISIVNLIIWLGVGGLWW).

This sequence belongs to the SLC13A/DASS transporter (TC 2.A.47) family. DIT1 subfamily. Monomer. The N-terminus is blocked. As to expression, expressed in leaves.

The protein localises to the plastid. It localises to the chloroplast inner membrane. 2-oxoglutarate/malate translocator that transports carbon skeletons into chloroplasts for net glutamate synthesis. This translocator exchanges malate for internal succinate, fumarate and 2-oxoglutarate but not for aspartate and glutamate. Involved with DIT2 in primary ammonia assimilation and in the re-assimilation of ammonia generated by the photorespiratory pathway. Imports 2-oxoglutarate into plastids as precursor for ammonia assimilation. 2-oxoglutarate is converted to glutamate, the end product of ammonia assimilation, which is exported to the cytosol by DIT2. The chain is Dicarboxylate transporter 1, chloroplastic (DIT1) from Spinacia oleracea (Spinach).